The primary structure comprises 430 residues: Tumor necrosis factor receptor superfamily member 19L (430 aa).

A signal peptide spans 1-25 (MKPSLLCRPLSCFLMLLPWPLATLT). Over 26–162 (STTLWQCPPG…AGGPEETAAQ (137 aa)) the chain is Extracellular. The TNFR-Cys repeat unit spans residues 50 to 90 (PCPPGTFSAAWGSSPCQPHARCSLWRRLEAQVGMATRDTLC). 2 disulfide bridges follow: C51–C65 and C71–C90. Residues 134–143 (VAAGASSGGE) show a composition bias toward low complexity. Residues 134 to 156 (VAAGASSGGETRQPGNGTRAGGP) form a disordered region. An N-linked (GlcNAc...) asparagine glycan is attached at N149. Residues 163-183 (YAVIAIVPVFCLMGLLGILVC) traverse the membrane as a helical segment. The Cytoplasmic segment spans residues 184-430 (NLLKRKGYHC…VRLSESNLVI (247 aa)). Residue T223 is modified to Phosphothreonine. An RFRV motif; mediates interaction with STK39 motif is present at residues 349-352 (RFRV). The tract at residues 373–410 (AGPSWGDLPDSPQPGLPPEQQALLGSGGSRTKWLKPPA) is disordered.

The protein belongs to the RELT family. In terms of assembly, interacts with TRAF1. Interacts with RELL1, RELL2 and OXSR1. Interacts with PLSCR1. Interacts with STK39. Post-translationally, phosphorylated in vitro by OXSR1. Phosphorylated by STK39. As to expression, spleen, lymph node, brain, breast and peripheral blood leukocytes (at protein level). Expressed highly in bone marrow and fetal liver. Very low levels in skeletal muscle, testis and colon. Not detected in kidney and pancreas.

It localises to the cell membrane. The protein resides in the cytoplasm. It is found in the perinuclear region. Its function is as follows. May play a role in apoptosis. Induces activation of MAPK14/p38 and MAPK8/JNK MAPK cascades, when overexpressed. Involved in dental enamel formation. The sequence is that of Tumor necrosis factor receptor superfamily member 19L (RELT) from Homo sapiens (Human).